The primary structure comprises 704 residues: Ubiquitin-like modifier-activating enzyme atg7 (704 aa).

Positions 372–377 (GAGTLG) match the GXGXXG motif motif. Residue C555 is the Glycyl thioester intermediate of the active site. Residues 660 to 699 (ALTEKDYITELSGLAEVQRKAEAAANDVEWDSDEEGMEDE) are homodimerization. The disordered stretch occupies residues 682–704 (AAANDVEWDSDEEGMEDEEPELL). The segment covering 687-704 (VEWDSDEEGMEDEEPELL) has biased composition (acidic residues).

Belongs to the ATG7 family. Homodimer. Interacts with ATG8 through a thioester bond between Cys-555 and the C-terminal Gly of ATG8 and with ATG12 through a thioester bond between Cys-555 and the C-terminal Gly of ATG12. Also interacts with ATG3.

The protein resides in the cytoplasm. The protein localises to the preautophagosomal structure. In terms of biological role, E1-like activating enzyme involved in the 2 ubiquitin-like systems required for cytoplasm to vacuole transport (Cvt) and autophagy. Activates ATG12 for its conjugation with ATG5 and ATG8 for its conjugation with phosphatidylethanolamine. Both systems are needed for the ATG8 association to Cvt vesicles and autophagosomes membranes. Autophagy is essential for maintenance of amino acid levels and protein synthesis under nitrogen starvation. Required for selective autophagic degradation of the nucleus (nucleophagy) as well as for mitophagy which contributes to regulate mitochondrial quantity and quality by eliminating the mitochondria to a basal level to fulfill cellular energy requirements and preventing excess ROS production. Required for normal mycelial growth and conidiogenesis, and regulates sclerotial formation. Plays an essential role in pathogenesis. This chain is Ubiquitin-like modifier-activating enzyme atg7, found in Botryotinia fuckeliana (strain T4) (Noble rot fungus).